Reading from the N-terminus, the 531-residue chain is Large neutral amino acids transporter small subunit 2 (531 aa).

Positions 1–29 are disordered; the sequence is MEKGARQRNNTAKNHPGSDTSPEAEASSG. Topologically, residues 1–43 are cytoplasmic; the sequence is MEKGARQRNNTAKNHPGSDTSPEAEASSGGGGVALKKEIGLVS. Positions 7-21 are enriched in polar residues; sequence QRNNTAKNHPGSDTS. A phosphoserine mark is found at serine 18, serine 21, serine 27, and serine 28. The helical transmembrane segment at 44–64 threads the bilayer; the sequence is ACGIIVGNIIGSGIFVSPKGV. Isoleucine 52 serves as a coordination point for L-leucine. Topologically, residues 65–72 are extracellular; the sequence is LENAGSVG. Residues 73 to 94 traverse the membrane as a helical segment; the sequence is LALIVWIVTGIITAVGALCYAE. Residues 95-115 are Cytoplasmic-facing; sequence LGVTIPKSGGDYSYVKDIFGG. A helical membrane pass occupies residues 116–148; it reads LAGFLRLWIAVLVIYPTNQAVIALTFSNYVLQP. L-tryptophan is bound at residue asparagine 133. The Extracellular segment spans residues 149-156; that stretch reads LFPTCFPP. The helical transmembrane segment at 157-177 threads the bilayer; that stretch reads ESGLRLLAAICLLLLTWVNCS. Residues 178 to 180 lie on the Cytoplasmic side of the membrane; sequence SVR. Residues 181–209 traverse the membrane as a helical segment; the sequence is WATRVQDIFTAGKLLALALIIIMGIVQIC. The Extracellular portion of the chain corresponds to 210 to 229; that stretch reads KGEFFWLEPKNAFENFQEPD. Residues 230–251 form a helical membrane-spanning segment; it reads IGLVALAFLQGSFAYGGWNFLN. Glycine 245 contributes to the L-leucine binding site. Residues 252–264 are Cytoplasmic-facing; it reads YVTEELVDPYKNL. Residues 265–286 form a helical membrane-spanning segment; sequence PRAIFISIPLVTFVYVFANIAY. Over 287-311 the chain is Extracellular; sequence VTAMSPQELLASNAVAVTFGEKLLG. Residues 312 to 337 traverse the membrane as a helical segment; it reads VMAWIMPISVALSTFGGVNGSLFTSS. Residues 338-363 lie on the Cytoplasmic side of the membrane; that stretch reads RLFFAGAREGHLPSVLAMIHVKRCTP. Residues 364-381 form a helical membrane-spanning segment; sequence IPALLFTCLSTLLMLVTS. Residues 382–385 are Extracellular-facing; sequence DMYT. The helical transmembrane segment at 386 to 407 threads the bilayer; sequence LINYVGFINYLFYGVTVAGQIV. Residue asparagine 394 participates in L-tryptophan binding. At 408–422 the chain is on the cytoplasmic side; that stretch reads LRWKKPDIPRPIKVS. A run of 2 helical transmembrane segments spans residues 423 to 445 and 446 to 465; these read LLFPIIYLLFWAFLLIFSLWSEP and VVCGIGLAIMLTGVPVYFLG. At 466–531 the chain is on the cytoplasmic side; sequence VYWQHKPKCF…VKDPDSEEQP (66 aa). Positions 499–531 are disordered; it reads NSGAEETTDDLEEQHKPIFKPTPVKDPDSEEQP. Serine 527 is subject to Phosphoserine.

Belongs to the amino acid-polyamine-organocation (APC) superfamily. L-type amino acid transporter (LAT) (TC 2.A.3.8) family. In terms of assembly, disulfide-linked heterodimer composed of the catalytic light chain subunit SLC7A8 and the heavy chain subunit SLC3A2. SLC3A2 acts as a chaperone for correct plasma membrane trafficking and stabilization of SLC7A8 and modulates the substrate affinity and specificity of SLC7A8. ICAM-1 associates with the heterodimer SLC3A2/SLC7A8; facilitates leucine uptake. As to expression, strongly expressed in kidney and small intestine. Moderately present in placenta, ovary and brain. Expressed in the inner ear.

The protein resides in the cell membrane. Its subcellular location is the basolateral cell membrane. The enzyme catalyses L-histidine(in) + L-phenylalanine(out) = L-histidine(out) + L-phenylalanine(in). It carries out the reaction L-tryptophan(in) + L-phenylalanine(out) = L-tryptophan(out) + L-phenylalanine(in). It catalyses the reaction L-isoleucine(in) + L-phenylalanine(out) = L-isoleucine(out) + L-phenylalanine(in). The catalysed reaction is L-valine(in) + L-phenylalanine(out) = L-valine(out) + L-phenylalanine(in). The enzyme catalyses L-leucine(in) + L-phenylalanine(out) = L-leucine(out) + L-phenylalanine(in). It carries out the reaction L-glutamine(in) + L-phenylalanine(out) = L-glutamine(out) + L-phenylalanine(in). It catalyses the reaction L-cysteine(in) + L-phenylalanine(out) = L-cysteine(out) + L-phenylalanine(in). The catalysed reaction is L-phenylalanine(out) + L-methionine(in) = L-phenylalanine(in) + L-methionine(out). The enzyme catalyses L-leucine(out) + L-methionine(in) = L-leucine(in) + L-methionine(out). It carries out the reaction L-cysteine(out) + L-methionine(in) = L-cysteine(in) + L-methionine(out). It catalyses the reaction S-methylmercury-L-cysteine(out) + L-methionine(in) = S-methylmercury-L-cysteine(in) + L-methionine(out). The catalysed reaction is S-methylmercury-L-cysteine(in) + L-leucine(out) = S-methylmercury-L-cysteine(out) + L-leucine(in). The enzyme catalyses S-methylmercury-L-cysteine(in) + L-phenylalanine(out) = S-methylmercury-L-cysteine(out) + L-phenylalanine(in). It carries out the reaction L-phenylalanine(out) + L-serine(in) = L-phenylalanine(in) + L-serine(out). It catalyses the reaction L-phenylalanine(out) + glycine(in) = L-phenylalanine(in) + glycine(out). The catalysed reaction is L-phenylalanine(out) + L-alanine(in) = L-phenylalanine(in) + L-alanine(out). The enzyme catalyses L-tryptophan(in) = L-tryptophan(out). It carries out the reaction 3,3',5-triiodo-L-thyronine(out) = 3,3',5-triiodo-L-thyronine(in). It catalyses the reaction 3,3'-diiodo-L-thyronine(out) = 3,3'-diiodo-L-thyronine(in). The catalysed reaction is L-dopa(out) + L-phenylalanine(in) = L-dopa(in) + L-phenylalanine(out). In terms of biological role, associates with SLC3A2 to form a functional heterodimeric complex that translocates small and large neutral amino acids with broad specificity and a stoichiometry of 1:1. Functions as amino acid antiporter mediating the influx of extracellular essential amino acids mainly in exchange with the efflux of highly concentrated intracellular amino acids. Has relatively symmetrical selectivities but strongly asymmetrical substrate affinities at both the intracellular and extracellular sides of the transporter. This asymmetry allows SLC7A8 to regulate intracellular amino acid pools (mM concentrations) by exchange with external amino acids (uM concentration range), equilibrating the relative concentrations of different amino acids across the plasma membrane instead of mediating their net uptake. May play an essential role in the reabsorption of neutral amino acids from the epithelial cells to the bloodstream in the kidney. Involved in the uptake of methylmercury (MeHg) when administered as the L-cysteine or D,L-homocysteine complexes, and hence plays a role in metal ion homeostasis and toxicity. Involved in the cellular activity of small molecular weight nitrosothiols, via the stereoselective transport of L-nitrosocysteine (L-CNSO) across the transmembrane. Imports the thyroid hormone diiodothyronine (T2) and to a smaller extent triiodothyronine (T3) but not rT 3 or thyroxine (T4). Mediates the uptake of L-DOPA. May participate in auditory function. The polypeptide is Large neutral amino acids transporter small subunit 2 (Slc7a8) (Mus musculus (Mouse)).